The sequence spans 160 residues: Lipoprotein signal peptidase (160 aa).

Transmembrane regions (helical) follow at residues 7–27, 61–81, and 91–111; these read VIYY…KWLV, GQFW…IIYI, and AGIG…DRVF. Active-site residues include Asp117 and Asp135. The chain crosses the membrane as a helical span at residues 133–153; sequence IADSALTVGVILLFIHMFFFA.

It belongs to the peptidase A8 family.

The protein localises to the cell membrane. It carries out the reaction Release of signal peptides from bacterial membrane prolipoproteins. Hydrolyzes -Xaa-Yaa-Zaa-|-(S,diacylglyceryl)Cys-, in which Xaa is hydrophobic (preferably Leu), and Yaa (Ala or Ser) and Zaa (Gly or Ala) have small, neutral side chains.. It participates in protein modification; lipoprotein biosynthesis (signal peptide cleavage). Its function is as follows. This protein specifically catalyzes the removal of signal peptides from prolipoproteins. The protein is Lipoprotein signal peptidase of Geobacillus thermodenitrificans (strain NG80-2).